The chain runs to 327 residues: GMP reductase (327 aa).

C176 serves as the catalytic Thioimidate intermediate. 205–228 contacts NADP(+); the sequence is IIADGGIRTHGDIAKSIRFGASMV.

This sequence belongs to the IMPDH/GMPR family. GuaC type 2 subfamily.

The catalysed reaction is IMP + NH4(+) + NADP(+) = GMP + NADPH + 2 H(+). In terms of biological role, catalyzes the irreversible NADPH-dependent deamination of GMP to IMP. It functions in the conversion of nucleobase, nucleoside and nucleotide derivatives of G to A nucleotides, and in maintaining the intracellular balance of A and G nucleotides. This is GMP reductase from Streptococcus suis (strain 05ZYH33).